We begin with the raw amino-acid sequence, 311 residues long: MTKLIFMGTPDFSATVLKGLLTDDRYEILAVVTQPDRAVGRKKVIQETPVKQAAKEAGLSIYQPEKLSGSPEMEDLMKLGADGIVTAAFGQFLPSKLLDSMDFAVNVHASLLPRHRGGAPIHYALIQGDEEAGVTIMEMVKEMDAGDMISRRSIPITDEDNVGTLFEKLALVGRDLLLDTLPAYIAGDIKPEPQDTSQVTFSPNIKPEEEKLDWNKTNRQLFNQIRGMNPWPVAHTFLKGDRFKIYEALPVEGQGNPGEILSIGKKELIVATAEGALSLKQVQPAGKPKMDIASFLNGVGRTLTVGERFGD.

A (6S)-5,6,7,8-tetrahydrofolate-binding site is contributed by 110 to 113; the sequence is SLLP.

Belongs to the Fmt family.

It catalyses the reaction L-methionyl-tRNA(fMet) + (6R)-10-formyltetrahydrofolate = N-formyl-L-methionyl-tRNA(fMet) + (6S)-5,6,7,8-tetrahydrofolate + H(+). In terms of biological role, attaches a formyl group to the free amino group of methionyl-tRNA(fMet). The formyl group appears to play a dual role in the initiator identity of N-formylmethionyl-tRNA by promoting its recognition by IF2 and preventing the misappropriation of this tRNA by the elongation apparatus. This Streptococcus pneumoniae (strain Taiwan19F-14) protein is Methionyl-tRNA formyltransferase.